Reading from the N-terminus, the 490-residue chain is Betaine aldehyde dehydrogenase (490 aa).

Residues Ile-27 and Asp-93 each contribute to the K(+) site. 150-152 (GAW) lines the NAD(+) pocket. The active-site Charge relay system is the Lys-162. Residue 176-179 (KPSE) participates in NAD(+) binding. Val-180 is a K(+) binding site. 230–233 (GTDT) contacts NAD(+). Leu-246 serves as a coordination point for K(+). Residue Glu-252 is the Proton acceptor of the active site. The NAD(+) site is built by Gly-254, Cys-286, and Glu-387. Residue Cys-286 is the Nucleophile of the active site. Position 286 is a cysteine sulfenic acid (-SOH) (Cys-286). Positions 457 and 460 each coordinate K(+). Glu-464 functions as the Charge relay system in the catalytic mechanism.

The protein belongs to the aldehyde dehydrogenase family. As to quaternary structure, dimer of dimers. It depends on K(+) as a cofactor.

It carries out the reaction betaine aldehyde + NAD(+) + H2O = glycine betaine + NADH + 2 H(+). The protein operates within amine and polyamine biosynthesis; betaine biosynthesis via choline pathway; betaine from betaine aldehyde: step 1/1. Functionally, involved in the biosynthesis of the osmoprotectant glycine betaine. Catalyzes the irreversible oxidation of betaine aldehyde to the corresponding acid. The polypeptide is Betaine aldehyde dehydrogenase (Pseudomonas fluorescens (strain SBW25)).